Here is a 331-residue protein sequence, read N- to C-terminus: Homoarginine-6-hydroxylase 2-ODD-C23 (331 aa).

The Fe2OG dioxygenase domain maps to 182-289 (PFWVMRLIGY…RVSVVYFYET (108 aa)). Fe cation is bound by residues His-212, Asp-214, and His-270. Arg-280 is a 2-oxoglutarate binding site.

Belongs to the iron/ascorbate-dependent oxidoreductase family. Requires Fe(2+) as cofactor.

Its subcellular location is the cytoplasm. The protein resides in the cytosol. The enzyme catalyses L-homoarginine + 2-oxoglutarate + O2 = 6-hydroxy-L-homoarginine + succinate + CO2. Functionally, 2-oxoglutarate-dependent dioxygenase catalyzing homoarginine 6-hydroxylation thus producing 6-hydroxy-L-homoarginine. Guanidine (Gd) is in turn synthesized by the spontaneous conversion of 6-hydroxy-L-homoarginine to (S)-2-amino-6-oxohexanoate (RHEA:79843); guanidine is a nitrogen-rich compound that can serve as a defense or signaling substance. In Glycine max (Soybean), this protein is Homoarginine-6-hydroxylase 2-ODD-C23.